The chain runs to 156 residues: Transcriptional repressor NrdR (156 aa).

Residues 3–34 (CPFCGSMDTRVLDSRPTLDGTAIRRRRECSSC) fold into a zinc finger. The 91-residue stretch at 49–139 (VLVVKKDGRR…VYRDFREVDQ (91 aa)) folds into the ATP-cone domain.

The protein belongs to the NrdR family. It depends on Zn(2+) as a cofactor.

Negatively regulates transcription of bacterial ribonucleotide reductase nrd genes and operons by binding to NrdR-boxes. This Thermotoga maritima (strain ATCC 43589 / DSM 3109 / JCM 10099 / NBRC 100826 / MSB8) protein is Transcriptional repressor NrdR.